Here is a 784-residue protein sequence, read N- to C-terminus: Protein DBF4 homolog B (784 aa).

A BRCT domain is found at 27–117; it reads CREITFAGKS…SRGKQLLKKV (91 aa). A disordered region spans residues 222 to 243; sequence TVKKKDPGDQEEEEGQRSQKPQ. The DBF4-type zinc finger occupies 244–293; the sequence is ARKRKGYCECCEETFDTLSEHLVGEHHFRFVSNPLSYKMIDDLAAQLTCD. Zn(2+) is bound by residues Cys251, Cys254, His264, and His270. Disordered stretches follow at residues 299-332, 348-368, and 495-529; these read FGSPTSPEAERSSQNEDWDLDLAPGEAEPAGNEG, HADCEDQGAPAYLRDGGAEEP, and TVGSQGDVTSHSAANKPHTENCPVDSTGDRHAQPA. The span at 498–507 shows a compositional bias: polar residues; it reads SQGDVTSHSA.

In terms of assembly, forms a complex with cdc7. In terms of processing, phosphorylated. Stably phosphorylated throughout the cell cycle.

The protein resides in the nucleus. Its function is as follows. Regulatory subunit for cdc7 which activates its kinase activity thereby playing a central role in DNA replication and cell proliferation. Specifically required during the initiation of DNA replication in egg and during early embryonic development. The complex cdc7-dbf4b phosphorylates mcm2 and mcm4 subunits and is required for cdc45 loading. The chain is Protein DBF4 homolog B (dbf4b) from Xenopus laevis (African clawed frog).